Reading from the N-terminus, the 395-residue chain is Receptor-like cytoplasmic kinase 176 (395 aa).

The interval 1-45 (MGNCWGAKISSESPCRSASSPSGGTSKYASNSSVSAASVPPTPRS) is disordered. 2 stretches are compositionally biased toward low complexity: residues 10–22 (SSESPCRSASSPS) and 29–39 (ASNSSVSAASV). Residues 70–355 (FRPDSVLGEG…EQVVAVLEQL (286 aa)) form the Protein kinase domain. Residues 76-84 (LGEGGFGSV) and Lys108 each bind ATP. Asp205 acts as the Proton acceptor in catalysis. Residues 359–395 (KETGANPQLQKKSSSKNAGSNGSKPSSKGKPANARLV) form a disordered region. Low complexity predominate over residues 369–395 (KKSSSKNAGSNGSKPSSKGKPANARLV).

Belongs to the protein kinase superfamily. Ser/Thr protein kinase family. Interacts with CERK1.

The catalysed reaction is L-seryl-[protein] + ATP = O-phospho-L-seryl-[protein] + ADP + H(+). It catalyses the reaction L-threonyl-[protein] + ATP = O-phospho-L-threonyl-[protein] + ADP + H(+). In terms of biological role, functions downstream of CERK1 in the microbial peptidoglycans (PGNs) and fungal chitin signaling pathways that mediate innate immunity. Participates in the activation of defense genes during response to PGN and chitin. This Oryza sativa subsp. japonica (Rice) protein is Receptor-like cytoplasmic kinase 176.